A 203-amino-acid polypeptide reads, in one-letter code: UPF0637 protein SERP0693 (203 aa).

This sequence belongs to the UPF0637 family.

This is UPF0637 protein SERP0693 from Staphylococcus epidermidis (strain ATCC 35984 / DSM 28319 / BCRC 17069 / CCUG 31568 / BM 3577 / RP62A).